A 121-amino-acid chain; its full sequence is Small ribosomal subunit protein uS13 (121 aa).

The segment at Lys92–Lys121 is disordered.

This sequence belongs to the universal ribosomal protein uS13 family. In terms of assembly, part of the 30S ribosomal subunit. Forms a loose heterodimer with protein S19. Forms two bridges to the 50S subunit in the 70S ribosome.

Located at the top of the head of the 30S subunit, it contacts several helices of the 16S rRNA. In the 70S ribosome it contacts the 23S rRNA (bridge B1a) and protein L5 of the 50S subunit (bridge B1b), connecting the 2 subunits; these bridges are implicated in subunit movement. Contacts the tRNAs in the A and P-sites. This chain is Small ribosomal subunit protein uS13, found in Bordetella bronchiseptica (strain ATCC BAA-588 / NCTC 13252 / RB50) (Alcaligenes bronchisepticus).